The sequence spans 370 residues: Early nodulin-like protein 1 (370 aa).

An N-terminal signal peptide occupies residues 1 to 27; sequence MSAIMKSLCFSFLILASFATFFSVADA. Positions 28–129 constitute a Phytocyanin domain; that stretch reads WRFNVGGNGA…GQKLIVVVLA (102 aa). N58 is a glycosylation site (N-linked (GlcNAc...) asparagine). C83 and C117 are oxidised to a cystine. The segment covering 135-175 has biased composition (low complexity); the sequence is SAPAHSPVPSVSPTQPPKSHSPVSPVAPASAPSKSQPPRSS. The interval 135–347 is disordered; it reads SAPAHSPVPS…PAPSPRTNSA (213 aa). Positions 176–194 are enriched in polar residues; that stretch reads VSPAQPPKSSSPISHTPAL. 2 stretches are compositionally biased toward low complexity: residues 195–205 and 215–290; these read SPSHATSHSPA and SPVS…QSPA. Pro residues predominate over residues 291–305; it reads TPSPMTPQSPSPVSS. The span at 306 to 318 shows a compositional bias: low complexity; it reads PSPDQSAAPSDQS. Residues 319 to 334 show a composition bias toward polar residues; it reads TPLAPSPSETTPTADN. An N-linked (GlcNAc...) asparagine glycan is attached at N334. A lipid anchor (GPI-anchor amidated asparagine) is attached at N345. The propeptide at 346-370 is removed in mature form; it reads SASGLAVTSVMSTLFSATFTFLMFA.

It belongs to the early nodulin-like (ENODL) family. As to expression, mostly expressed in stems, leaves and flowers, and, to a lower extent, in seedlings, roots and seeds.

The protein localises to the cell membrane. In terms of biological role, may act as a carbohydrate transporter. In Arabidopsis thaliana (Mouse-ear cress), this protein is Early nodulin-like protein 1.